We begin with the raw amino-acid sequence, 232 residues long: Succinyl-CoA:3-ketoacid coenzyme A transferase subunit A (232 aa).

A CoA-binding site is contributed by 24-30 (GGFGLCG).

The protein belongs to the 3-oxoacid CoA-transferase subunit A family. Heterodimer of a subunit A and a subunit B.

It catalyses the reaction a 3-oxo acid + succinyl-CoA = a 3-oxoacyl-CoA + succinate. This Helicobacter pylori (strain ATCC 700392 / 26695) (Campylobacter pylori) protein is Succinyl-CoA:3-ketoacid coenzyme A transferase subunit A (scoA).